We begin with the raw amino-acid sequence, 878 residues long: Alanine--tRNA ligase (878 aa).

Zn(2+)-binding residues include H567, H571, C669, and H673.

This sequence belongs to the class-II aminoacyl-tRNA synthetase family. It depends on Zn(2+) as a cofactor.

The protein localises to the cytoplasm. It carries out the reaction tRNA(Ala) + L-alanine + ATP = L-alanyl-tRNA(Ala) + AMP + diphosphate. In terms of biological role, catalyzes the attachment of alanine to tRNA(Ala) in a two-step reaction: alanine is first activated by ATP to form Ala-AMP and then transferred to the acceptor end of tRNA(Ala). Also edits incorrectly charged Ser-tRNA(Ala) and Gly-tRNA(Ala) via its editing domain. The polypeptide is Alanine--tRNA ligase (Rickettsia massiliae (strain Mtu5)).